We begin with the raw amino-acid sequence, 311 residues long: Probable manganese-dependent inorganic pyrophosphatase (311 aa).

Mn(2+) is bound by residues His9, Asp13, Asp15, Asp75, His97, and Asp149.

The protein belongs to the PPase class C family. Requires Mn(2+) as cofactor.

It localises to the cytoplasm. It catalyses the reaction diphosphate + H2O = 2 phosphate + H(+). This is Probable manganese-dependent inorganic pyrophosphatase from Lactobacillus delbrueckii subsp. bulgaricus (strain ATCC BAA-365 / Lb-18).